The primary structure comprises 335 residues: Dehydration-responsive element-binding protein 2A (335 aa).

Disordered stretches follow at residues 1-32 (MAVYDQSGDRNRTQIDTSRKRKSRSRGDGTTV) and 50-74 (STKKRKVPAKGSKKGCMKGKGGPEN). The Nuclear localization signal signature appears at 19 to 55 (RKRKSRSRGDGTTVAERLKRWKEYNETVEEVSTKKRK). The span at 52–66 (KKRKVPAKGSKKGCM) shows a compositional bias: basic residues. A DNA-binding region (AP2/ERF) is located at residues 78 to 135 (SFRGVRQRIWGKWVAEIREPNRGSRLWLGTFPTAQEAASAYDEAAKAMYGPLARLNFP). Positions 279 to 304 (QDRYPGNSVANGSYRPESQQSGFDPL) are disordered. Residues 286-304 (SVANGSYRPESQQSGFDPL) are compositionally biased toward polar residues.

This sequence belongs to the AP2/ERF transcription factor family. ERF subfamily. As to quaternary structure, interacts with MED25. Binds to DPB3-1 in the nucleus during heat-stress. Post-translationally, ubiquitinated by DRIP1 and DRIP2. Ubiquitination probably leads to its subsequent degradation, thus negatively regulating response to drought. In terms of tissue distribution, expressed preferentially in roots and stems, and at a lower level in leaves.

The protein localises to the nucleus. Functionally, transcriptional activator that binds specifically to the DNA sequence 5'-[AG]CCGAC-3'. Binding to the C-repeat/DRE element mediates high salinity- and dehydration-inducible transcription. Promotes the expression of heat stress-inducible genes by contributing to the formation of a heat stress-specific transcriptional complex with NF-Y subunits (e.g. DPB3-1, NF-YA2 and NF-YB3) at the promoter of target genes, thus promoting heat tolerance. The protein is Dehydration-responsive element-binding protein 2A of Arabidopsis thaliana (Mouse-ear cress).